A 447-amino-acid polypeptide reads, in one-letter code: MKNDNQTLKRTMTSRHIMMMALGGAIGAGLFKGSSSAIDVAGPSVIIAYLLGGIILLFIMQGLAEMAVRNRNARTFRDLVQQVLGNYAAYFLDWIYWKMWVLNIAAEAVVAAIFIQYWLPGCPIWVLALGISLIVTIVNLLSVKIFAETEYWLAMIKITVIIIFIILGLLLLFVSFGDHTASGFSNLTDHGGFFPHGGTGLITAMLVVIYSYGGTEIIGVTLAETKNPEKVVPKAVRSTLTRIVAFYLLPFFIIVSLIPWNQVNSVPESPFVMVFKMVGIPGADHIMNAVILLAIISSMNSGLYGSSRILYTQASDGRLPKVFSKLSSKNVPMFAILMCTSSLYIGVLISLFAGSQTFNYLMGSLGYTVLFIWLIIGFAHLKSRKQQTETPAYYVKWFPYTTWFAIVALLAILIGVIMTTSIVITGITAAIYLLITVAYLVKGRKHQ.

12 consecutive transmembrane segments (helical) span residues 17–37 (IMMMALGGAIGAGLFKGSSSA), 40–60 (VAGPSVIIAYLLGGIILLFIM), 95–115 (IYWKMWVLNIAAEAVVAAIFI), 118–138 (WLPGCPIWVLALGISLIVTIV), 154–174 (AMIKITVIIIFIILGLLLLFV), 200–220 (GLITAMLVVIYSYGGTEIIGV), 243–263 (IVAFYLLPFFIIVSLIPWNQV), 289–311 (AVILLAIISSMNSGLYGSSRILY), 333–353 (MFAILMCTSSLYIGVLISLFA), 361–381 (LMGSLGYTVLFIWLIIGFAHL), 393–415 (YYVKWFPYTTWFAIVALLAILIG), and 419–441 (TTSIVITGITAAIYLLITVAYLV).

Belongs to the amino acid-polyamine-organocation (APC) superfamily.

The protein resides in the cell membrane. In terms of biological role, may participate in leucine metabolism. May transport leucine or a compound related to leucine metabolism. This is an uncharacterized protein from Bacillus subtilis (strain 168).